Here is a 594-residue protein sequence, read N- to C-terminus: Putative lipase ATG15-1 (594 aa).

Topologically, residues 1–12 are cytoplasmic; that stretch reads MRRRPLCTSASR. The chain crosses the membrane as a helical; Signal-anchor for type II membrane protein span at residues 13 to 33; that stretch reads VTASLLLSFLAVSSAAELPIL. The Lumenal segment spans residues 34–594; that stretch reads PAPPISPQPH…ANHFVYVLHA (561 aa). N-linked (GlcNAc...) asparagine glycosylation is found at N144, N179, N201, N259, and N283. Residue S299 is the Charge relay system of the active site. Residues N432 and N445 are each glycosylated (N-linked (GlcNAc...) asparagine). The segment covering 447 to 469 has biased composition (low complexity); sequence TETTTTSTSKPTSTSKSSKSNTR. 2 disordered regions span residues 447-473 and 489-509; these read TETTTTSTSKPTSTSKSSKSNTRTRTE and TGTQTSTSTPKHTSTSSTSTC. Residues N576 and N582 are each glycosylated (N-linked (GlcNAc...) asparagine).

This sequence belongs to the AB hydrolase superfamily. Lipase family. As to quaternary structure, binds to both phosphatidylinositol (PI) and phosphatidylinositol 3,5-bisphosphate (PIP2).

The protein resides in the endosome. It is found in the multivesicular body membrane. The protein localises to the prevacuolar compartment membrane. It catalyses the reaction a triacylglycerol + H2O = a diacylglycerol + a fatty acid + H(+). Lipase which is essential for lysis of subvacuolar cytoplasm to vacuole targeted bodies and intravacuolar autophagic bodies. Involved in the lysis of intravacuolar multivesicular body (MVB) vesicles. The intravacuolar membrane disintegration by ATG15 is critical to life span extension. This chain is Putative lipase ATG15-1 (ATG15-1), found in Phaeosphaeria nodorum (strain SN15 / ATCC MYA-4574 / FGSC 10173) (Glume blotch fungus).